Consider the following 451-residue polypeptide: 2-succinylbenzoate--CoA ligase (451 aa).

Belongs to the ATP-dependent AMP-binding enzyme family. MenE subfamily.

It carries out the reaction 2-succinylbenzoate + ATP + CoA = 2-succinylbenzoyl-CoA + AMP + diphosphate. It functions in the pathway quinol/quinone metabolism; 1,4-dihydroxy-2-naphthoate biosynthesis; 1,4-dihydroxy-2-naphthoate from chorismate: step 5/7. Its pathway is quinol/quinone metabolism; menaquinone biosynthesis. Converts 2-succinylbenzoate (OSB) to 2-succinylbenzoyl-CoA (OSB-CoA). This chain is 2-succinylbenzoate--CoA ligase, found in Escherichia coli (strain K12).